The primary structure comprises 268 residues: Small ribosomal subunit protein eS1 (268 aa).

The interval 1–21 (MAVGKNKGLSKGGKKGGKKKV) is disordered.

The protein belongs to the eukaryotic ribosomal protein eS1 family. Component of the small ribosomal subunit. Mature ribosomes consist of a small (40S) and a large (60S) subunit. The 40S subunit contains about 33 different proteins and 1 molecule of RNA (18S). The 60S subunit contains about 49 different proteins and 3 molecules of RNA (28S, 5.8S and 5S).

The protein localises to the cytoplasm. Functionally, essential for oogenesis; required for late follicle cell development. This is Small ribosomal subunit protein eS1 from Drosophila willistoni (Fruit fly).